The sequence spans 226 residues: CRISPR-associated endonuclease Cas3-HD (226 aa).

The HD Cas3-type domain maps to 9-204; sequence GRDCLQTYED…HVLTVCDNWG (196 aa). Mg(2+)-binding residues include D56, H74, H101, and H102.

This sequence belongs to the CRISPR-associated nuclease Cas3-HD family. As to quaternary structure, monomer. Can form a Cascade complex with Csa5, Cas7, Cas5a, Cas3 and Cas8a2. Requires Mg(2+) as cofactor.

CRISPR (clustered regularly interspaced short palindromic repeat), is an adaptive immune system that provides protection against mobile genetic elements (viruses, transposable elements and conjugative plasmids). CRISPR clusters contain sequences complementary to antecedent mobile elements and target invading nucleic acids. CRISPR clusters are transcribed and processed into CRISPR RNA (crRNA). Cas3 plus Cascade participate in CRISPR interference, the third stage of CRISPR immunity. Acts as a ssDNA and ssRNA nuclease, probably with both exo- and endonuclease activities. Activity is higher for DNA than RNA. The chain is CRISPR-associated endonuclease Cas3-HD (cas3') from Thermoproteus tenax (strain ATCC 35583 / DSM 2078 / JCM 9277 / NBRC 100435 / Kra 1).